Reading from the N-terminus, the 266-residue chain is 4-hydroxy-tetrahydrodipicolinate reductase (266 aa).

Position 10-15 (10-15 (GPRGRM)) interacts with NAD(+). K38 contacts NADP(+). NAD(+)-binding positions include 99 to 101 (GTT) and 125 to 128 (APNF). The active-site Proton donor/acceptor is the H155. H156 lines the (S)-2,3,4,5-tetrahydrodipicolinate pocket. K159 functions as the Proton donor in the catalytic mechanism. 165-166 (GT) provides a ligand contact to (S)-2,3,4,5-tetrahydrodipicolinate.

The protein belongs to the DapB family.

The protein resides in the cytoplasm. It catalyses the reaction (S)-2,3,4,5-tetrahydrodipicolinate + NAD(+) + H2O = (2S,4S)-4-hydroxy-2,3,4,5-tetrahydrodipicolinate + NADH + H(+). It carries out the reaction (S)-2,3,4,5-tetrahydrodipicolinate + NADP(+) + H2O = (2S,4S)-4-hydroxy-2,3,4,5-tetrahydrodipicolinate + NADPH + H(+). Its pathway is amino-acid biosynthesis; L-lysine biosynthesis via DAP pathway; (S)-tetrahydrodipicolinate from L-aspartate: step 4/4. In terms of biological role, catalyzes the conversion of 4-hydroxy-tetrahydrodipicolinate (HTPA) to tetrahydrodipicolinate. The sequence is that of 4-hydroxy-tetrahydrodipicolinate reductase from Bacillus cereus (strain Q1).